Consider the following 378-residue polypeptide: 1-acyl-sn-glycerol-3-phosphate acyltransferase delta (378 aa).

The chain crosses the membrane as a helical span at residues 11–31; it reads FLCHLIFCYVFIVSGLIINTI. The HXXXXD motif motif lies at 96-101; sequence HKFEID. Helical transmembrane passes span 125–145, 307–327, and 338–358; these read ELAY…VFCT, TLVN…RFVI, and LASF…MIGV.

Belongs to the 1-acyl-sn-glycerol-3-phosphate acyltransferase family.

It localises to the endoplasmic reticulum membrane. It catalyses the reaction a 1-acyl-sn-glycero-3-phosphate + an acyl-CoA = a 1,2-diacyl-sn-glycero-3-phosphate + CoA. The catalysed reaction is (4Z,7Z,10Z,13Z,16Z,19Z)-docosahexaenoyl-CoA + 1-hexadecanoyl-sn-glycero-3-phosphate = 1-hexadecanoyl-2-(4Z,7Z,10Z,13Z,16Z,19Z-docosahexaenoyl)-sn-glycero-3-phosphate + CoA. The enzyme catalyses 1-octadecanoyl-sn-glycero-3-phosphate + (9Z,12Z)-octadecadienoyl-CoA = 1-octadecanoyl-2-(9Z,12Z-octadecadienoyl)-sn-glycero-3-phosphate + CoA. It carries out the reaction 1-octadecanoyl-sn-glycero-3-phosphate + (4Z,7Z,10Z,13Z,16Z,19Z)-docosahexaenoyl-CoA = 1-octadecanoyl-2-(4Z,7Z,10Z,13Z,16Z,19Z-docosahexaenoyl)-sn-glycero-3-phosphate + CoA. It catalyses the reaction (4Z,7Z,10Z,13Z,16Z,19Z)-docosahexaenoyl-CoA + 1-(9Z-octadecenoyl)-sn-glycero-3-phosphate = 1-(9Z-octadecenoyl)-2-(4Z,7Z,10Z,13Z,16Z,19Z-docosahexaenoyl)-sn-glycero-3-phosphate + CoA. It functions in the pathway phospholipid metabolism; CDP-diacylglycerol biosynthesis; CDP-diacylglycerol from sn-glycerol 3-phosphate: step 2/3. In terms of biological role, converts 1-acyl-sn-glycerol-3-phosphate (lysophosphatidic acid or LPA) into 1,2-diacyl-sn-glycerol-3-phosphate (phosphatidic acid or PA) by incorporating an acyl moiety at the sn-2 position of the glycerol backbone. Exhibits high acyl-CoA specificity for polyunsaturated fatty acyl-CoA, especially docosahexaenoyl-CoA (22:6-CoA, DHA-CoA). This is 1-acyl-sn-glycerol-3-phosphate acyltransferase delta (AGPAT4) from Bos taurus (Bovine).